Consider the following 105-residue polypeptide: Large ribosomal subunit protein uL24 (105 aa).

It belongs to the universal ribosomal protein uL24 family. In terms of assembly, part of the 50S ribosomal subunit.

In terms of biological role, one of two assembly initiator proteins, it binds directly to the 5'-end of the 23S rRNA, where it nucleates assembly of the 50S subunit. Its function is as follows. One of the proteins that surrounds the polypeptide exit tunnel on the outside of the subunit. This is Large ribosomal subunit protein uL24 from Clostridium botulinum (strain ATCC 19397 / Type A).